The primary structure comprises 158 residues: Disease resistance response protein DRRG49-C (158 aa).

Belongs to the BetVI family.

The polypeptide is Disease resistance response protein DRRG49-C (Pisum sativum (Garden pea)).